Here is an 83-residue protein sequence, read N- to C-terminus: uncharacterized protein (83 aa).

This is an uncharacterized protein from Escherichia coli (Bacteriophage T4).